The following is a 259-amino-acid chain: Adenosylcobinamide-GDP ribazoletransferase (259 aa).

7 consecutive transmembrane segments (helical) span residues 41-61, 67-87, 119-139, 148-168, 179-199, 200-220, and 237-257; these read AAIW…AIVF, FGLA…IATG, IGAY…NVLS, LFAL…FMHL, AGAG…GAIP, LLLL…LLFA, and TIGA…SVAL.

It belongs to the CobS family. It depends on Mg(2+) as a cofactor.

The protein resides in the cell inner membrane. It carries out the reaction alpha-ribazole + adenosylcob(III)inamide-GDP = adenosylcob(III)alamin + GMP + H(+). The enzyme catalyses alpha-ribazole 5'-phosphate + adenosylcob(III)inamide-GDP = adenosylcob(III)alamin 5'-phosphate + GMP + H(+). The protein operates within cofactor biosynthesis; adenosylcobalamin biosynthesis; adenosylcobalamin from cob(II)yrinate a,c-diamide: step 7/7. In terms of biological role, joins adenosylcobinamide-GDP and alpha-ribazole to generate adenosylcobalamin (Ado-cobalamin). Also synthesizes adenosylcobalamin 5'-phosphate from adenosylcobinamide-GDP and alpha-ribazole 5'-phosphate. This Mesorhizobium japonicum (strain LMG 29417 / CECT 9101 / MAFF 303099) (Mesorhizobium loti (strain MAFF 303099)) protein is Adenosylcobinamide-GDP ribazoletransferase.